A 441-amino-acid chain; its full sequence is GTPase Der (441 aa).

2 EngA-type G domains span residues 2–164 (HKVA…PADD) and 173–343 (IRIS…DKWQ). Residues 8-15 (GRPNVGKS), 55-59 (DTGGL), 116-119 (NKID), 179-186 (GRPNVGKS), 226-230 (DTAGI), and 288-291 (NKWD) each bind GTP.

Belongs to the TRAFAC class TrmE-Era-EngA-EngB-Septin-like GTPase superfamily. EngA (Der) GTPase family. As to quaternary structure, associates with the 50S ribosomal subunit.

Its function is as follows. GTPase that plays an essential role in the late steps of ribosome biogenesis. The chain is GTPase Der from Deinococcus deserti (strain DSM 17065 / CIP 109153 / LMG 22923 / VCD115).